The primary structure comprises 611 residues: Dehydrogenase pkfF (611 aa).

An N-terminal signal peptide occupies residues Met-1–Ala-19. 2 N-linked (GlcNAc...) asparagine glycosylation sites follow: Asn-28 and Asn-38. Residues Thr-50–Ser-51, Glu-71–Ala-72, and His-137–Val-140 contribute to the FAD site. Residues Asn-180, Asn-187, Asn-240, Asn-272, Asn-409, and Asn-471 are each glycosylated (N-linked (GlcNAc...) asparagine). The active-site Proton acceptor is His-547. FAD-binding positions include Ala-581 and Pro-592–Gln-593.

This sequence belongs to the GMC oxidoreductase family. FAD is required as a cofactor.

It functions in the pathway secondary metabolite biosynthesis. Functionally, dehydrogenase; part of the gene cluster that mediates the biosynthesis of aspernidine A, a prenylated isoindolinone. The starting point of the biosynthesis of aspernidin A is the production of orsellinaldehyde by the non-reducing polyketide synthase pkfA. Hydroxylation, methylation of one of the phenol groups, and prenylation, presumably catalyzed by the prenyltransferase pkfE, would be needed to yield aspernidine D. Subsequently, the cytochrome P450 monooxygenase pkfB is responsible for hydroxylation of aspernidine D to yield aspernidine E. The dehydrogenase pkfF may be responsible for further oxidation of aspernidine E to form a dialdehyde intermediate which is further transformed in a series of steps, some of which are enzyme-mediated, to generate aspernidine A. The possibility that additional enzymes outside of the cluster are involved in aspernidine A biosynthesis cannot be excluded. In Emericella nidulans (strain FGSC A4 / ATCC 38163 / CBS 112.46 / NRRL 194 / M139) (Aspergillus nidulans), this protein is Dehydrogenase pkfF.